The following is a 368-amino-acid chain: Peptide chain release factor 2 (368 aa).

Glutamine 245 carries the post-translational modification N5-methylglutamine.

The protein belongs to the prokaryotic/mitochondrial release factor family. Methylated by PrmC. Methylation increases the termination efficiency of RF2.

It localises to the cytoplasm. Peptide chain release factor 2 directs the termination of translation in response to the peptide chain termination codons UGA and UAA. In Treponema pallidum (strain Nichols), this protein is Peptide chain release factor 2 (prfB).